The primary structure comprises 356 residues: Replication factor C subunit 3 (356 aa).

Position 20 is an N6-acetyllysine (lysine 20). Serine 125 carries the post-translational modification Phosphoserine.

It belongs to the activator 1 small subunits family. Subunit of the RFC complex, an heteropentameric complex consisting of a large subunit RFC1 and four small subunits RFC2, RFC3, RFC4 and RFC5; the RFC complex interacts with PCNA. Forms an heterotetrameric complex with RFC2, RFC4 and RFC5; this complex has ATPase activity but is not stimulated by PCNA. The heterotetramer of subunits RFC2, RFC3, RFC4 and RFC5 interacts with RAD17. Interacts with CNTD1; this interaction facilitates crossover formation.

The protein localises to the nucleus. Subunit of the replication factor C (RFC) complex which acts during elongation of primed DNA templates by DNA polymerases delta and epsilon, and is necessary for ATP-dependent loading of proliferating cell nuclear antigen (PCNA) onto primed DNA. In Homo sapiens (Human), this protein is Replication factor C subunit 3 (RFC3).